A 23-amino-acid polypeptide reads, in one-letter code: Aldehyde dehydrogenase (23 aa).

The protein belongs to the aldehyde dehydrogenase family.

It carries out the reaction an aldehyde + NAD(+) + H2O = a carboxylate + NADH + 2 H(+). The polypeptide is Aldehyde dehydrogenase (Moraxella sp. (strain TAE123)).